The following is a 114-amino-acid chain: MVDQNPKRSGEPPVWLMFGAGGTVSAIFLPVVILIIGLLLPFGLVDAHNLITFAYSWIGKLVILVLTIFPMWCGLHRIHHGMHDLKVHVPAGGFIFYGLATIYTVWVLFAVINL.

3 consecutive transmembrane segments (helical) span residues 24–44 (VSAI…PFGL), 50–70 (LITF…TIFP), and 92–112 (GGFI…FAVI).

It belongs to the FrdD family. In terms of assembly, part of an enzyme complex containing four subunits: a flavoprotein (FrdA), an iron-sulfur protein (FrdB), and two hydrophobic anchor proteins (FrdC and FrdD).

Its subcellular location is the cell inner membrane. Anchors the catalytic components of the fumarate reductase complex to the cell membrane, binds quinones. The protein is Fumarate reductase subunit D of Haemophilus influenzae (strain 86-028NP).